The following is a 155-amino-acid chain: Lipoprotein signal peptidase (155 aa).

2 helical membrane-spanning segments follow: residues Ile52–Val72 and Leu85–Phe105. Residues Asp111 and Asp129 contribute to the active site. The helical transmembrane segment at Ile124–Leu144 threads the bilayer.

The protein belongs to the peptidase A8 family.

It localises to the cell membrane. It carries out the reaction Release of signal peptides from bacterial membrane prolipoproteins. Hydrolyzes -Xaa-Yaa-Zaa-|-(S,diacylglyceryl)Cys-, in which Xaa is hydrophobic (preferably Leu), and Yaa (Ala or Ser) and Zaa (Gly or Ala) have small, neutral side chains.. It functions in the pathway protein modification; lipoprotein biosynthesis (signal peptide cleavage). Functionally, this protein specifically catalyzes the removal of signal peptides from prolipoproteins. In Bacillus pumilus (strain SAFR-032), this protein is Lipoprotein signal peptidase.